We begin with the raw amino-acid sequence, 260 residues long: Tryptophan synthase alpha chain (260 aa).

Catalysis depends on proton acceptor residues E52 and D63.

The protein belongs to the TrpA family. As to quaternary structure, tetramer of two alpha and two beta chains.

The catalysed reaction is (1S,2R)-1-C-(indol-3-yl)glycerol 3-phosphate + L-serine = D-glyceraldehyde 3-phosphate + L-tryptophan + H2O. Its pathway is amino-acid biosynthesis; L-tryptophan biosynthesis; L-tryptophan from chorismate: step 5/5. In terms of biological role, the alpha subunit is responsible for the aldol cleavage of indoleglycerol phosphate to indole and glyceraldehyde 3-phosphate. The sequence is that of Tryptophan synthase alpha chain from Streptococcus thermophilus (strain ATCC BAA-250 / LMG 18311).